The primary structure comprises 113 residues: Hydrogenase maturation factor HypA (113 aa).

H2 contacts Ni(2+). Zn(2+) is bound by residues C73, C76, C89, and C92.

It belongs to the HypA/HybF family.

Its function is as follows. Involved in the maturation of [NiFe] hydrogenases. Required for nickel insertion into the metal center of the hydrogenase. This is Hydrogenase maturation factor HypA from Moorella thermoacetica (strain ATCC 39073 / JCM 9320).